We begin with the raw amino-acid sequence, 396 residues long: 8-amino-7-oxononanoate synthase (396 aa).

Substrate is bound at residue R19. Pyridoxal 5'-phosphate is bound at residue 106 to 107; that stretch reads GY. Position 131 (H131) interacts with substrate. S176, H204, and T233 together coordinate pyridoxal 5'-phosphate. K236 bears the N6-(pyridoxal phosphate)lysine mark. Position 350 (T350) interacts with substrate.

Belongs to the class-II pyridoxal-phosphate-dependent aminotransferase family. BioF subfamily. Homodimer. Pyridoxal 5'-phosphate is required as a cofactor.

The enzyme catalyses 6-carboxyhexanoyl-[ACP] + L-alanine + H(+) = (8S)-8-amino-7-oxononanoate + holo-[ACP] + CO2. The protein operates within cofactor biosynthesis; biotin biosynthesis. In terms of biological role, catalyzes the decarboxylative condensation of pimeloyl-[acyl-carrier protein] and L-alanine to produce 8-amino-7-oxononanoate (AON), [acyl-carrier protein], and carbon dioxide. This chain is 8-amino-7-oxononanoate synthase, found in Pseudomonas syringae pv. tomato (strain ATCC BAA-871 / DC3000).